Consider the following 883-residue polypeptide: Phosphoenolpyruvate carboxylase (883 aa).

Active-site residues include His-138 and Lys-546.

This sequence belongs to the PEPCase type 1 family. Requires Mg(2+) as cofactor.

The enzyme catalyses oxaloacetate + phosphate = phosphoenolpyruvate + hydrogencarbonate. Functionally, forms oxaloacetate, a four-carbon dicarboxylic acid source for the tricarboxylic acid cycle. This Shigella flexneri protein is Phosphoenolpyruvate carboxylase.